A 189-amino-acid chain; its full sequence is Transcription factor E (189 aa).

The HTH TFE/IIEalpha-type domain occupies 9–101 (AVKSLEIYVR…FWRIDSDTIN (93 aa)).

Belongs to the TFE family. Monomer. Interaction with RNA polymerase subunits RpoF and RpoE is necessary for Tfe stimulatory transcription activity. Able to interact with Tbp and RNA polymerase in the absence of DNA promoter. Interacts both with the preinitiation and elongation complexes.

In terms of biological role, transcription factor that plays a role in the activation of archaeal genes transcribed by RNA polymerase. Facilitates transcription initiation by enhancing TATA-box recognition by TATA-box-binding protein (Tbp), and transcription factor B (Tfb) and RNA polymerase recruitment. Not absolutely required for transcription in vitro, but particularly important in cases where Tbp or Tfb function is not optimal. It dynamically alters the nucleic acid-binding properties of RNA polymerases by stabilizing the initiation complex and destabilizing elongation complexes. Seems to translocate with the RNA polymerase following initiation and acts by binding to the non template strand of the transcription bubble in elongation complexes. This is Transcription factor E from Aeropyrum pernix (strain ATCC 700893 / DSM 11879 / JCM 9820 / NBRC 100138 / K1).